A 388-amino-acid polypeptide reads, in one-letter code: Fructose-bisphosphate aldolase, chloroplastic (388 aa).

The transit peptide at 1 to 38 (MASATLLKSSFLPKKSEWGATRQAAAPKPVTVSMVVRA) directs the protein to the chloroplast. Residue Arg72 coordinates substrate. Glu215 functions as the Proton acceptor in the catalytic mechanism. Lys257 (schiff-base intermediate with dihydroxyacetone-P) is an active-site residue. Substrate-binding positions include 299-301 (SGG) and Arg329.

It belongs to the class I fructose-bisphosphate aldolase family. Homotetramer. As to expression, expressed in leaf mesophyll cells.

It is found in the plastid. Its subcellular location is the chloroplast. The protein localises to the plastoglobule. The enzyme catalyses beta-D-fructose 1,6-bisphosphate = D-glyceraldehyde 3-phosphate + dihydroxyacetone phosphate. It functions in the pathway carbohydrate degradation; glycolysis; D-glyceraldehyde 3-phosphate and glycerone phosphate from D-glucose: step 4/4. Functionally, plays a key role in glycolysis and gluconeogenesis. In Oryza sativa subsp. japonica (Rice), this protein is Fructose-bisphosphate aldolase, chloroplastic.